Here is a 169-residue protein sequence, read N- to C-terminus: Ferric-chelate reductase (NAD(P)H) (169 aa).

Y7 provides a ligand contact to NADP(+). FMN contacts are provided by residues 27 to 31, 45 to 52, 82 to 84, and K89; these read QIANT, CLNKENDT, and RKS. NADP(+)-binding positions include H126 and 147 to 154; that span reads YADYHLMK.

Belongs to the non-flavoprotein flavin reductase family. As to quaternary structure, homodimer. Requires FMN as cofactor. It depends on FAD as a cofactor.

The enzyme catalyses 2 a Fe(II)-siderophore + NAD(+) + H(+) = 2 a Fe(III)-siderophore + NADH. It catalyses the reaction 2 a Fe(II)-siderophore + NADP(+) + H(+) = 2 a Fe(III)-siderophore + NADPH. Catalyzes the reduction of bound ferric iron (Fe(3+)) in a variety of iron chelators (siderophores) using NAD(P)H as the electron donor, resulting in the release of Fe(2+). Not active with uncomplexed Fe(3+). Also reduces FMN and FAD, but not riboflavin. This is Ferric-chelate reductase (NAD(P)H) from Archaeoglobus fulgidus (strain ATCC 49558 / DSM 4304 / JCM 9628 / NBRC 100126 / VC-16).